The following is a 52-amino-acid chain: uncharacterized protein (52 aa).

Positions 3 to 46 (KIQLESSNQSVLKLEERRLNLTAEIERIYGQMDLKRKELENANL) form a coiled coil.

This is an uncharacterized protein from Dictyostelium discoideum (Social amoeba).